We begin with the raw amino-acid sequence, 258 residues long: ProSAAS (258 aa).

The signal sequence occupies residues 1–33 (MAGSPLLCGPRAGGVGILVLLLLGLLRLPPTLS). The proSAAS(1-180) stretch occupies residues 34-213 (ARPVKEPRSL…SSEPEAAPAP (180 aa)). Disordered stretches follow at residues 156 to 188 (PAPA…TPDV), 204 to 230 (SSEP…EVPP), and 239 to 258 (RVKR…LLPP). Positions 177 to 188 (DVEDAGDETPDV) are enriched in acidic residues. A compositionally biased stretch (low complexity) spans 204 to 213 (SSEPEAAPAP). Residues 219 to 258 (SVDQDLGPEVPPENVLGALLRVKRLENPSPQAPARRLLPP) are C-terminal inhibitory domain; interacts with PCSK1. A Sufficient for inhibition of PCSK1 motif is present at residues 237–242 (LLRVKR).

Interacts via the C-terminal inhibitory domain with PCSK1 66 kDa form. Proteolytically cleaved in the Golgi. Little SAAS, PEN, PEN-20 and Big LEN are the major processed peptides in proSAAS-overexpressing AtT-20 pituitary corticotropic cell line. In terms of tissue distribution, expressed in brain (mostly hypothalamus and pituitary) and gut. Expressed in trigeminal ganglia and neuroendocrine cell lines. As to expression, expressed in pancreas, spinal cord and brain (most abundant in striatum, hippocampus, pons and medulla, and cortex) (at protein level).

It is found in the secreted. The protein resides in the golgi apparatus. Its subcellular location is the trans-Golgi network. May function in the control of the neuroendocrine secretory pathway. Proposed be a specific endogenous inhibitor of PCSK1. ProSAAS and Big PEN-LEN, both containing the C-terminal inhibitory domain, but not the processed peptides reduce PCSK1 activity in the endoplasmic reticulum and Golgi. It reduces the activity of the 87 kDa form but not the autocatalytically derived 66 kDa form of PCSK1. Subsequent processing of proSAAS may eliminate the inhibition. Slows down convertase-mediated processing of proopiomelanocortin and proenkephalin. May control the intracellular timing of PCSK1 rather than its total level of activity. In terms of biological role, endogenous ligand for GPR171. Neuropeptide involved in the regulation of feeding. Functionally, endogenous ligand for GPR171. Neuropeptide involved in the regulation of feeding. The sequence is that of ProSAAS (Pcsk1n) from Mus musculus (Mouse).